The chain runs to 195 residues: ATP-dependent Clp protease proteolytic subunit (195 aa).

The active-site Nucleophile is Ser-99. His-124 is a catalytic residue.

This sequence belongs to the peptidase S14 family. Fourteen ClpP subunits assemble into 2 heptameric rings which stack back to back to give a disk-like structure with a central cavity, resembling the structure of eukaryotic proteasomes.

Its subcellular location is the cytoplasm. It catalyses the reaction Hydrolysis of proteins to small peptides in the presence of ATP and magnesium. alpha-casein is the usual test substrate. In the absence of ATP, only oligopeptides shorter than five residues are hydrolyzed (such as succinyl-Leu-Tyr-|-NHMec, and Leu-Tyr-Leu-|-Tyr-Trp, in which cleavage of the -Tyr-|-Leu- and -Tyr-|-Trp bonds also occurs).. Functionally, cleaves peptides in various proteins in a process that requires ATP hydrolysis. Has a chymotrypsin-like activity. Plays a major role in the degradation of misfolded proteins. In Carboxydothermus hydrogenoformans (strain ATCC BAA-161 / DSM 6008 / Z-2901), this protein is ATP-dependent Clp protease proteolytic subunit.